Reading from the N-terminus, the 282-residue chain is ADP-ribosyl cyclase/cyclic ADP-ribose hydrolase (282 aa).

The first 24 residues, 1–24 (MSPVAIVACVCLAVTLTRISPSEA), serve as a signal peptide directing secretion. Intrachain disulfides connect cysteine 39/cysteine 58, cysteine 75/cysteine 155, cysteine 136/cysteine 149, cysteine 230/cysteine 251, and cysteine 263/cysteine 272.

This sequence belongs to the ADP-ribosyl cyclase family. Ovotestis.

Its subcellular location is the cytoplasmic vesicle. It catalyses the reaction NAD(+) = cyclic ADP-beta-D-ribose + nicotinamide + H(+). It carries out the reaction NAD(+) + H2O = ADP-D-ribose + nicotinamide + H(+). The catalysed reaction is nicotinate + NADP(+) = nicotinate-adenine dinucleotide phosphate + nicotinamide. With respect to regulation, activity is presumably regulated by its sequestration in vesicles before egg fertilization. After fertilization and upon NADase release, it could then be regulated via its potential phosphorylation sites. Functionally, synthesizes cyclic ADP-ribose (cADPR), a second messenger for calcium mobilization from endoplasmic reticulum. Might make the Ca(2+) mobilizer nicotinate-adenine dinucleotide phosphate. Does not have cADPR hydrolase activity. The polypeptide is ADP-ribosyl cyclase/cyclic ADP-ribose hydrolase (Aplysia kurodai (Kuroda's sea hare)).